A 580-amino-acid chain; its full sequence is tRNA-guanine(15) transglycosylase (580 aa).

Asp91 acts as the Nucleophile in catalysis. Positions 126 and 192 each coordinate substrate. 3 residues coordinate Zn(2+): Cys275, Cys277, and Cys280. Residues 504–579 form the PUA domain; that stretch reads RMRVVVDEDA…LAVKVRRGVE (76 aa).

The protein belongs to the archaeosine tRNA-ribosyltransferase family. Zn(2+) is required as a cofactor.

The enzyme catalyses guanosine(15) in tRNA + 7-cyano-7-deazaguanine = 7-cyano-7-carbaguanosine(15) in tRNA + guanine. Its pathway is tRNA modification; archaeosine-tRNA biosynthesis. Its function is as follows. Exchanges the guanine residue with 7-cyano-7-deazaguanine (preQ0) at position 15 in the dihydrouridine loop (D-loop) of archaeal tRNAs. The chain is tRNA-guanine(15) transglycosylase from Thermococcus onnurineus (strain NA1).